A 508-amino-acid polypeptide reads, in one-letter code: UTP--glucose-1-phosphate uridylyltransferase (508 aa).

Ser-13 carries the phosphoserine modification. Residues 113–116 (LNGG), Lys-127, Gln-190, and Gly-222 contribute to the UTP site. 115 to 116 (GG) contacts substrate. Lys-127 serves as a coordination point for Mg(2+). Substrate-binding positions include His-223 and 251-253 (NID). UTP is bound by residues Asp-253 and Lys-396. Asp-253 serves as a coordination point for Mg(2+). Lys-396 is a catalytic residue. Thr-426 carries the post-translational modification Phosphothreonine. Position 434 is a phosphoserine (Ser-434). Lys-438 is subject to N6-acetyllysine. Phosphoserine is present on residues Ser-448 and Ser-461. An oligomerization region spans residues 457–508 (HLTVSGDVTFGKNVSLKGTVIIIXNHGDRIDIPPGAVLENKIVSGNLRILDH). Positions 502 to 503 (NL) are critical for end-to-end subunit interaction.

The protein belongs to the UDPGP type 1 family. Homooctamer.

It is found in the cytoplasm. The catalysed reaction is alpha-D-glucose 1-phosphate + UTP + H(+) = UDP-alpha-D-glucose + diphosphate. It functions in the pathway glycan biosynthesis; glycogen biosynthesis. Functionally, UTP--glucose-1-phosphate uridylyltransferase catalyzing the conversion of glucose-1-phosphate into UDP-glucose, a crucial precursor for the production of glycogen. The protein is UTP--glucose-1-phosphate uridylyltransferase (UGP2) of Sus scrofa (Pig).